The following is a 204-amino-acid chain: MLEADNLECVRGERRLFAGLDFKLEGGELLNLQGRNGAGKTSLLRMLIGLLPPEAGEIRWKGKSIKTQGDDFRADLCYLGHLNAIKEELTPLENLLAAAHLADEELSEDDAIDALEQVGLAGREDLACKYLSQGQKRRVALARLVKEKRPLWILDEPFVALDVAAVDWLAGIISGHLQRGGMAVMTTHQQVNIPAGTVRELRLG.

Positions 2 to 203 constitute an ABC transporter domain; it reads LEADNLECVR…PAGTVRELRL (202 aa). Residue 34 to 41 participates in ATP binding; the sequence is GRNGAGKT.

The protein belongs to the ABC transporter superfamily. CcmA exporter (TC 3.A.1.107) family. The complex is composed of two ATP-binding proteins (CcmA) and two transmembrane proteins (CcmB).

Its subcellular location is the cell inner membrane. It carries out the reaction heme b(in) + ATP + H2O = heme b(out) + ADP + phosphate + H(+). In terms of biological role, part of the ABC transporter complex CcmAB involved in the biogenesis of c-type cytochromes; once thought to export heme, this seems not to be the case, but its exact role is uncertain. Responsible for energy coupling to the transport system. In Dechloromonas aromatica (strain RCB), this protein is Cytochrome c biogenesis ATP-binding export protein CcmA.